The chain runs to 267 residues: Ribosomal RNA small subunit methyltransferase NEP1 (267 aa).

The tract at residues 1–46 (MSELKNGTTEPKKNETTQSDSKSKSTSTNKSSVPPASLVPVQPTAL) is disordered. Residues 16-32 (TTQSDSKSKSTSTNKSS) are compositionally biased toward low complexity. Residues L195, G222, 227 to 229 (GKD), and 242 to 247 (LSDYPL) contribute to the S-adenosyl-L-methionine site.

The protein belongs to the class IV-like SAM-binding methyltransferase superfamily. RNA methyltransferase NEP1 family. Homodimer.

The protein resides in the nucleus. Its subcellular location is the nucleolus. The enzyme catalyses a pseudouridine in rRNA + S-adenosyl-L-methionine = an N(1)-methylpseudouridine in rRNA + S-adenosyl-L-homocysteine + H(+). S-adenosyl-L-methionine-dependent pseudouridine N(1)-methyltransferase that methylates the pseudouridine corresponding to position 1189 (Psi1189) in S.cerevisiae 18S rRNA. Involved the biosynthesis of the hypermodified N1-methyl-N3-(3-amino-3-carboxypropyl) pseudouridine (m1acp3-Psi) conserved in eukaryotic 18S rRNA. Also has an essential role in 40S ribosomal subunit biogenesis independent on its methyltransferase activity, facilitating the incorporation of ribosomal protein S19 during the formation of pre-ribosomes. This Candida albicans (Yeast) protein is Ribosomal RNA small subunit methyltransferase NEP1.